The primary structure comprises 91 residues: Small ribosomal subunit protein uS15 (91 aa).

This sequence belongs to the universal ribosomal protein uS15 family. In terms of assembly, part of the 30S ribosomal subunit. Forms a bridge to the 50S subunit in the 70S ribosome, contacting the 23S rRNA.

One of the primary rRNA binding proteins, it binds directly to 16S rRNA where it helps nucleate assembly of the platform of the 30S subunit by binding and bridging several RNA helices of the 16S rRNA. In terms of biological role, forms an intersubunit bridge (bridge B4) with the 23S rRNA of the 50S subunit in the ribosome. This Nautilia profundicola (strain ATCC BAA-1463 / DSM 18972 / AmH) protein is Small ribosomal subunit protein uS15.